The primary structure comprises 331 residues: Sideroflexin-5 (331 aa).

4 consecutive transmembrane segments (helical) span residues Pro104 to Trp126, Tyr153 to Ile175, Thr243 to Leu265, and His278 to Leu300.

The protein belongs to the sideroflexin family.

It localises to the mitochondrion inner membrane. The enzyme catalyses citrate(in) = citrate(out). Its function is as follows. Mitochondrial amino-acid transporter. This chain is Sideroflexin-5, found in Caenorhabditis elegans.